We begin with the raw amino-acid sequence, 211 residues long: Large ribosomal subunit protein eL13 (211 aa).

An N6-acetyllysine modification is found at Lys-16. Residues Ser-52, Ser-77, and Ser-106 each carry the phosphoserine modification. Residues Lys-123 and Lys-145 each participate in a glycyl lysine isopeptide (Lys-Gly) (interchain with G-Cter in SUMO2) cross-link. A Glycyl lysine isopeptide (Lys-Gly) (interchain with G-Cter in SUMO1); alternate cross-link involves residue Lys-174. Glycyl lysine isopeptide (Lys-Gly) (interchain with G-Cter in SUMO2); alternate cross-links involve residues Lys-174 and Lys-177. N6-acetyllysine; alternate is present on Lys-177.

It belongs to the eukaryotic ribosomal protein eL13 family. As to quaternary structure, component of the 60S large ribosomal subunit (LSU).

It localises to the cytoplasm. Component of the ribosome, a large ribonucleoprotein complex responsible for the synthesis of proteins in the cell. The small ribosomal subunit (SSU) binds messenger RNAs (mRNAs) and translates the encoded message by selecting cognate aminoacyl-transfer RNA (tRNA) molecules. The large subunit (LSU) contains the ribosomal catalytic site termed the peptidyl transferase center (PTC), which catalyzes the formation of peptide bonds, thereby polymerizing the amino acids delivered by tRNAs into a polypeptide chain. The nascent polypeptides leave the ribosome through a tunnel in the LSU and interact with protein factors that function in enzymatic processing, targeting, and the membrane insertion of nascent chains at the exit of the ribosomal tunnel. As part of the LSU, it is probably required for its formation and the maturation of rRNAs. Plays a role in bone development. In Cricetulus griseus (Chinese hamster), this protein is Large ribosomal subunit protein eL13 (RPL13).